Reading from the N-terminus, the 306-residue chain is Flavin adenine dinucleotide synthase (306 aa).

Residues serine 59, isoleucine 107, glycine 164, 182–185 (DSNW), arginine 190, and arginine 300 contribute to the FAD site.

This sequence belongs to the PAPS reductase family. FAD1 subfamily.

Its subcellular location is the cytoplasm. It carries out the reaction FMN + ATP + H(+) = FAD + diphosphate. The protein operates within cofactor biosynthesis; FAD biosynthesis; FAD from FMN: step 1/1. In terms of biological role, catalyzes the adenylation of flavin mononucleotide (FMN) to form flavin adenine dinucleotide (FAD) coenzyme. In Saccharomyces cerevisiae (strain ATCC 204508 / S288c) (Baker's yeast), this protein is Flavin adenine dinucleotide synthase.